The chain runs to 692 residues: Elongation factor G (692 aa).

Residues 8–282 (ENTRNIGIMA…AVIDYLPSPL (275 aa)) form the tr-type G domain. Residues 17 to 24 (AHIDAGKT), 81 to 85 (DTPGH), and 135 to 138 (NKMD) each bind GTP.

The protein belongs to the TRAFAC class translation factor GTPase superfamily. Classic translation factor GTPase family. EF-G/EF-2 subfamily.

It localises to the cytoplasm. Catalyzes the GTP-dependent ribosomal translocation step during translation elongation. During this step, the ribosome changes from the pre-translocational (PRE) to the post-translocational (POST) state as the newly formed A-site-bound peptidyl-tRNA and P-site-bound deacylated tRNA move to the P and E sites, respectively. Catalyzes the coordinated movement of the two tRNA molecules, the mRNA and conformational changes in the ribosome. This chain is Elongation factor G, found in Bacillus cytotoxicus (strain DSM 22905 / CIP 110041 / 391-98 / NVH 391-98).